Here is a 197-residue protein sequence, read N- to C-terminus: Imidazoleglycerol-phosphate dehydratase (197 aa).

The protein belongs to the imidazoleglycerol-phosphate dehydratase family.

Its subcellular location is the cytoplasm. The enzyme catalyses D-erythro-1-(imidazol-4-yl)glycerol 3-phosphate = 3-(imidazol-4-yl)-2-oxopropyl phosphate + H2O. Its pathway is amino-acid biosynthesis; L-histidine biosynthesis; L-histidine from 5-phospho-alpha-D-ribose 1-diphosphate: step 6/9. This is Imidazoleglycerol-phosphate dehydratase from Teredinibacter turnerae (strain ATCC 39867 / T7901).